Consider the following 348-residue polypeptide: Phenylalanine--tRNA ligase alpha subunit (348 aa).

Glu269 contributes to the Mg(2+) binding site.

The protein belongs to the class-II aminoacyl-tRNA synthetase family. Phe-tRNA synthetase alpha subunit type 1 subfamily. Tetramer of two alpha and two beta subunits. Requires Mg(2+) as cofactor.

The protein localises to the cytoplasm. The catalysed reaction is tRNA(Phe) + L-phenylalanine + ATP = L-phenylalanyl-tRNA(Phe) + AMP + diphosphate + H(+). The polypeptide is Phenylalanine--tRNA ligase alpha subunit (Dechloromonas aromatica (strain RCB)).